The chain runs to 86 residues: Weak toxin 3 (86 aa).

A signal peptide spans 1–23 (MKTLLLTLVVVTIVCLDLGYTLT). 5 cysteine pairs are disulfide-bonded: cysteine 24/cysteine 45, cysteine 27/cysteine 32, cysteine 38/cysteine 63, cysteine 67/cysteine 78, and cysteine 79/cysteine 84.

The protein belongs to the three-finger toxin family. Ancestral subfamily. Orphan group II sub-subfamily. Expressed by the venom gland.

The protein localises to the secreted. Its function is as follows. Binds with low affinity to muscular (alpha-1-beta-1-delta-epsilon/CHRNA1-CHRNB1-CHRND-CHRNE) and very low affinity to neuronal (alpha-7/CHRNA7) nicotinic acetylcholine receptor (nAChR). The protein is Weak toxin 3 of Bungarus candidus (Malayan krait).